A 285-amino-acid chain; its full sequence is Bifunctional protein FolD (285 aa).

Residues 165–167 and serine 190 contribute to the NADP(+) site; that span reads GRS.

The protein belongs to the tetrahydrofolate dehydrogenase/cyclohydrolase family. Homodimer.

The enzyme catalyses (6R)-5,10-methylene-5,6,7,8-tetrahydrofolate + NADP(+) = (6R)-5,10-methenyltetrahydrofolate + NADPH. It carries out the reaction (6R)-5,10-methenyltetrahydrofolate + H2O = (6R)-10-formyltetrahydrofolate + H(+). It participates in one-carbon metabolism; tetrahydrofolate interconversion. Functionally, catalyzes the oxidation of 5,10-methylenetetrahydrofolate to 5,10-methenyltetrahydrofolate and then the hydrolysis of 5,10-methenyltetrahydrofolate to 10-formyltetrahydrofolate. This chain is Bifunctional protein FolD, found in Staphylococcus haemolyticus (strain JCSC1435).